The following is a 150-amino-acid chain: Deoxyuridine 5'-triphosphate nucleotidohydrolase (150 aa).

Substrate-binding positions include 65–67 (RSG), asparagine 78, and 82–84 (TID). The interval 130–150 (LSDTERGEGGFGHTGVASKAE) is disordered.

The protein belongs to the dUTPase family. Requires Mg(2+) as cofactor.

The enzyme catalyses dUTP + H2O = dUMP + diphosphate + H(+). Its pathway is pyrimidine metabolism; dUMP biosynthesis; dUMP from dCTP (dUTP route): step 2/2. Its function is as follows. This enzyme is involved in nucleotide metabolism: it produces dUMP, the immediate precursor of thymidine nucleotides and it decreases the intracellular concentration of dUTP so that uracil cannot be incorporated into DNA. The polypeptide is Deoxyuridine 5'-triphosphate nucleotidohydrolase (Chlorobaculum parvum (strain DSM 263 / NCIMB 8327) (Chlorobium vibrioforme subsp. thiosulfatophilum)).